Reading from the N-terminus, the 190-residue chain is Xanthine phosphoribosyltransferase (190 aa).

Leucine 20 and asparagine 27 together coordinate xanthine. 128–132 (ANGNA) lines the 5-phospho-alpha-D-ribose 1-diphosphate pocket. Lysine 156 is a xanthine binding site.

This sequence belongs to the purine/pyrimidine phosphoribosyltransferase family. Xpt subfamily. Homodimer.

It is found in the cytoplasm. It catalyses the reaction XMP + diphosphate = xanthine + 5-phospho-alpha-D-ribose 1-diphosphate. The protein operates within purine metabolism; XMP biosynthesis via salvage pathway; XMP from xanthine: step 1/1. Its function is as follows. Converts the preformed base xanthine, a product of nucleic acid breakdown, to xanthosine 5'-monophosphate (XMP), so it can be reused for RNA or DNA synthesis. This is Xanthine phosphoribosyltransferase from Clostridium novyi (strain NT).